The primary structure comprises 181 residues: Ribulose bisphosphate carboxylase small subunit, chloroplastic 1 (181 aa).

A chloroplast-targeting transit peptide spans 1-57 (MASSIVSSAAVATRSNVAQASMVAPFTGLKSAASFPVTKKNNNVDITSLASNGGRVR).

This sequence belongs to the RuBisCO small chain family. In terms of assembly, heterohexadecamer of 8 large and 8 small subunits.

It is found in the plastid. It localises to the chloroplast. In terms of biological role, ruBisCO catalyzes two reactions: the carboxylation of D-ribulose 1,5-bisphosphate, the primary event in carbon dioxide fixation, as well as the oxidative fragmentation of the pentose substrate. Both reactions occur simultaneously and in competition at the same active site. Although the small subunit is not catalytic it is essential for maximal activity. In Solanum tuberosum (Potato), this protein is Ribulose bisphosphate carboxylase small subunit, chloroplastic 1.